The chain runs to 723 residues: Homeobox protein HAT3.1 (723 aa).

Residues 1–10 (MYKAVSKRVT) show a composition bias toward basic residues. 2 disordered regions span residues 1-94 (MYKA…GSHR) and 135-173 (KRAQ…QVRE). Positions 11–23 (RSSGSGLKQTNVD) are enriched in polar residues. The segment covering 58-83 (LHHEIMDHGKGNEEQKPTPQTVKKDS) has biased composition (basic and acidic residues). The PHD-type zinc-finger motif lies at 265 to 322 (DIFCAKCGSKDLSVDNDIILCDGFCDRGFHQYCLEPPLRKEDIPPDDEGWLCPGCDCK). Disordered regions lie at residues 357–628 (GGQN…KTQR) and 680–723 (VEKL…RRRK). A compositionally biased stretch (acidic residues) spans 365-407 (LPSDDSDDEEYDPDCLNDNENDEDGSDDNEESENEDGSSDETE). Basic and acidic residues predominate over residues 417-427 (ESFKEGKDIMK). Residues 435-453 (DDSEDDDYDPDAPTCDDDK) are compositionally biased toward acidic residues. 2 stretches are compositionally biased toward basic and acidic residues: residues 518–530 (RNVE…KLYD) and 547–556 (DKTARMGKED). Residues 580–589 (KKLIRKSKRA) are compositionally biased toward basic residues. The homeobox DNA-binding region spans 614-673 (SSSSACKQTDPKTQRLYISFQENQYPDKATKESLAKELQMTVKQVNNWFKHRRWSINSKP). Positions 680–690 (VEKLKTGKEGE) are enriched in basic and acidic residues. Residues 695-705 (VAGSSKQTMET) show a composition bias toward polar residues.

Belongs to the PHD-associated homeobox family. Primarily detected in root tissue.

The protein resides in the nucleus. Its function is as follows. Binds only to large DNA fragments. Recognizes a DNA fragment carrying 8 copies of box7 motif of the light-induced cab-E promoter of Nicotiana plumbaginifolia. Also recognizes the box7m1 motif. This Arabidopsis thaliana (Mouse-ear cress) protein is Homeobox protein HAT3.1 (HAT3.1).